A 399-amino-acid polypeptide reads, in one-letter code: Acetate kinase (399 aa).

Asparagine 7 contributes to the Mg(2+) binding site. Lysine 14 contacts ATP. Residue arginine 91 participates in substrate binding. The active-site Proton donor/acceptor is the aspartate 148. Residues 208–212, 283–285, and 331–335 contribute to the ATP site; these read HLGNG, DFR, and GIGEN. Glutamate 384 lines the Mg(2+) pocket.

The protein belongs to the acetokinase family. In terms of assembly, homodimer. Mg(2+) is required as a cofactor. Mn(2+) serves as cofactor.

It is found in the cytoplasm. The enzyme catalyses acetate + ATP = acetyl phosphate + ADP. The protein operates within metabolic intermediate biosynthesis; acetyl-CoA biosynthesis; acetyl-CoA from acetate: step 1/2. Catalyzes the formation of acetyl phosphate from acetate and ATP. Can also catalyze the reverse reaction. This chain is Acetate kinase, found in Acetivibrio thermocellus (strain ATCC 27405 / DSM 1237 / JCM 9322 / NBRC 103400 / NCIMB 10682 / NRRL B-4536 / VPI 7372) (Clostridium thermocellum).